A 262-amino-acid polypeptide reads, in one-letter code: Putative glutamine--fructose-6-phosphate aminotransferase [isomerizing] (262 aa).

The active-site Nucleophile; for GATase activity is the Cys2. Residues 2–262 (CGIFGYCNFL…RKSPPFVHNT (261 aa)) enclose the Glutamine amidotransferase type-2 domain.

The catalysed reaction is D-fructose 6-phosphate + L-glutamine = D-glucosamine 6-phosphate + L-glutamate. Its pathway is nucleotide-sugar biosynthesis; UDP-N-acetyl-alpha-D-glucosamine biosynthesis; alpha-D-glucosamine 6-phosphate from D-fructose 6-phosphate: step 1/1. In terms of biological role, involved in amino sugar synthesis (formation of chitin, supplies the amino sugars of asparagine-linked oligosaccharides of glycoproteins). This is Putative glutamine--fructose-6-phosphate aminotransferase [isomerizing] from Saccharomyces cerevisiae (strain ATCC 204508 / S288c) (Baker's yeast).